Consider the following 338-residue polypeptide: Glycerol-3-phosphate dehydrogenase [NAD(P)+] (338 aa).

NADPH is bound by residues Ser-13, Trp-14, and Lys-108. Sn-glycerol 3-phosphate-binding residues include Lys-108, Gly-139, and Ser-141. Ala-143 serves as a coordination point for NADPH. Positions 194, 247, 257, 258, and 259 each coordinate sn-glycerol 3-phosphate. The active-site Proton acceptor is Lys-194. Position 258 (Arg-258) interacts with NADPH. 2 residues coordinate NADPH: Val-282 and Glu-284.

Belongs to the NAD-dependent glycerol-3-phosphate dehydrogenase family.

The protein localises to the cytoplasm. The catalysed reaction is sn-glycerol 3-phosphate + NAD(+) = dihydroxyacetone phosphate + NADH + H(+). It catalyses the reaction sn-glycerol 3-phosphate + NADP(+) = dihydroxyacetone phosphate + NADPH + H(+). The protein operates within membrane lipid metabolism; glycerophospholipid metabolism. Catalyzes the reduction of the glycolytic intermediate dihydroxyacetone phosphate (DHAP) to sn-glycerol 3-phosphate (G3P), the key precursor for phospholipid synthesis. In Streptococcus uberis (strain ATCC BAA-854 / 0140J), this protein is Glycerol-3-phosphate dehydrogenase [NAD(P)+].